We begin with the raw amino-acid sequence, 383 residues long: D-alanine--D-alanine ligase (383 aa).

The ATP-grasp domain occupies 169–373 (KALLRAAGLP…YPQLVDRLVR (205 aa)). 196–251 (QERLGLPVFVKPARGGSSIGISRVEAWADLDTAIKAARASDPKVLVESAIVGREIE) is a binding site for ATP. The Mg(2+) site is built by aspartate 327, glutamate 340, and asparagine 342.

Belongs to the D-alanine--D-alanine ligase family. The cofactor is Mg(2+). It depends on Mn(2+) as a cofactor.

The protein resides in the cytoplasm. It carries out the reaction 2 D-alanine + ATP = D-alanyl-D-alanine + ADP + phosphate + H(+). It participates in cell wall biogenesis; peptidoglycan biosynthesis. In terms of biological role, cell wall formation. In Frankia casuarinae (strain DSM 45818 / CECT 9043 / HFP020203 / CcI3), this protein is D-alanine--D-alanine ligase.